The chain runs to 255 residues: Aprataxin and PNK-like factor (255 aa).

Low complexity predominate over residues 1-11 (MSATDASTADS). Disordered regions lie at residues 1–117 (MSAT…VSSS), 131–168 (RRNPAHRSAEAHPGDQDYRRPNFPAPPLGTPACPFGNA), and 195–255 (RLRQ…DDYD). Composition is skewed to basic and acidic residues over residues 12-22 (GAKRKSSEDIT), 40-64 (KSEEPVASIKDETNPEVPMKIKAEP), and 137-150 (RSAEAHPGDQDYRR). PBZ-type zinc fingers lie at residues 121–142 (TSCRFGIRCYRRNPAHRSAEAH) and 161–182 (PACPFGNACYRRNPVHFQDYSH). Positions 207–218 (DDSGTDEEDEPF) are enriched in acidic residues. A compositionally biased stretch (basic and acidic residues) spans 221 to 230 (DNDRDADYRP). Positions 234–244 (INEDEDDELEF) are enriched in acidic residues.

This sequence belongs to the APLF family.

Its function is as follows. Displays apurinic-apyrimidinic (AP) endonuclease and 3'-5' exonuclease activities in vitro. The protein is Aprataxin and PNK-like factor of Drosophila melanogaster (Fruit fly).